The following is a 66-amino-acid chain: Cytochrome c oxidase subunit 26, mitochondrial (66 aa).

The transit peptide at 1-8 (MFFSQVLR) directs the protein to the mitochondrion. Topologically, residues 9–27 (SSARAAPIKRYTGGRIGES) are mitochondrial matrix. The chain crosses the membrane as a helical span at residues 28–64 (WVITEGRRLIPEIFQWSAVLSVCLGWPGAVYFFSKAR). The Mitochondrial intermembrane segment spans residues 65 to 66 (KA).

The protein belongs to the fungal cytochrome c oxidase subunit 26 family. Component of the cytochrome c oxidase (complex IV, CIV), a multisubunit enzyme composed of 12 subunits. The complex is composed of a catalytic core of 3 subunits COX1, COX2 and COX3, encoded in the mitochondrial DNA, and 9 supernumerary subunits COX4, COX5A (or COX5B), COX6, COX7, COX8, COX9, COX12, COX13 and COX26, which are encoded in the nuclear genome. The complex exists as a monomer or a dimer and forms supercomplexes (SCs) in the inner mitochondrial membrane with a dimer of ubiquinol-cytochrome c oxidoreductase (cytochrome b-c1 complex, complex III, CIII), resulting in 2 different assemblies (supercomplexes III(2)IV and III(2)IV(2)).

The protein resides in the mitochondrion inner membrane. In terms of biological role, component of the cytochrome c oxidase, the last enzyme in the mitochondrial electron transport chain which drives oxidative phosphorylation. The respiratory chain contains 3 multisubunit complexes succinate dehydrogenase (complex II, CII), ubiquinol-cytochrome c oxidoreductase (cytochrome b-c1 complex, complex III, CIII) and cytochrome c oxidase (complex IV, CIV), that cooperate to transfer electrons derived from NADH and succinate to molecular oxygen, creating an electrochemical gradient over the inner membrane that drives transmembrane transport and the ATP synthase. Cytochrome c oxidase is the component of the respiratory chain that catalyzes the reduction of oxygen to water. Electrons originating from reduced cytochrome c in the intermembrane space (IMS) are transferred via the dinuclear copper A center (CU(A)) of COX2 and heme A of COX1 to the active site in COX1, a binuclear center (BNC) formed by heme A3 and copper B (CU(B)). The BNC reduces molecular oxygen to 2 water molecules using 4 electrons from cytochrome c in the IMS and 4 protons from the mitochondrial matrix. This is Cytochrome c oxidase subunit 26, mitochondrial (COX26) from Saccharomyces cerevisiae (strain ATCC 204508 / S288c) (Baker's yeast).